Consider the following 723-residue polypeptide: Capsid protein (723 aa).

The segment at Q658–T679 is disordered.

Belongs to the anelloviridae capsid protein family.

The protein localises to the virion. Its function is as follows. Self assemble to form an icosahedral capsid. In Torque teno virus (isolate Japanese macaque/Japan/Mf-TTV9/2000) (TTV), this protein is Capsid protein.